The chain runs to 459 residues: Transcription factor AP-2-beta (459 aa).

Lys-21 participates in a covalent cross-link: Glycyl lysine isopeptide (Lys-Gly) (interchain with G-Cter in SUMO). Residues 30–139 (HDGVPSHSSR…PQLSGLDPRR (110 aa)) form a disordered region. The segment covering 35 to 51 (SHSSRLSQLGSVSQGPY) has biased composition (polar residues). Residues 121-132 (LLPQPRAALPQL) show a composition bias toward low complexity. Phosphoserine; by PKA is present on Ser-258. The H-S-H (helix-span-helix), dimerization stretch occupies residues 299 to 429 (RRKAANVTLL…YLTEALKGMD (131 aa)). Residues 435 to 459 (NTTNRHTSGEGPGSKTGDKEEKHRK) are disordered. The segment covering 450–459 (TGDKEEKHRK) has biased composition (basic and acidic residues).

This sequence belongs to the AP-2 family. In terms of assembly, binds DNA as a dimer. Can form homodimers or heterodimers with other AP-2 family members. Interacts with CITED4. Interacts with UBE2I. Interacts with KCTD1; this interaction represses transcription activation. Interacts with CITED2 (via C-terminus); the interaction stimulates TFAP2B-transcriptional activity. Post-translationally, sumoylated. Sumoylated on Lys-21; which inhibits transcriptional activity. In terms of tissue distribution, localizes to neurons in areas of the cerebral cortex, cerebellum and hypothalamus (at protein level).

It localises to the nucleus. Functionally, sequence-specific DNA-binding protein that interacts with inducible viral and cellular enhancer elements to regulate transcription of selected genes. AP-2 factors bind to the consensus sequence 5'-GCCNNNGGC-3' and activate genes involved in a large spectrum of important biological functions including proper eye, face, body wall, limb and neural tube development. They also suppress a number of genes including MCAM/MUC18, C/EBP alpha and MYC. AP-2-beta appears to be required for normal face and limb development and for proper terminal differentiation and function of renal tubular epithelia. The protein is Transcription factor AP-2-beta (Tfap2b) of Mus musculus (Mouse).